A 782-amino-acid chain; its full sequence is Protein PAT1 homolog 1 (782 aa).

Disordered regions lie at residues 96–153 (GPKH…HSKP), 177–217 (LPES…YSAP), 332–372 (VREH…SKHM), and 460–481 (EVDS…GKHL). Over residues 108–117 (SGSFSRESSS) the composition is skewed to low complexity. Residues 208-217 (GGSQLTYSAP) are compositionally biased toward polar residues. Residues 335–347 (HKHKSSHRSRKNR) are compositionally biased toward basic residues. Positions 348–366 (GLSQQTSDAASQKSETGLQ) are enriched in polar residues. Residues 471–481 (SGDHKGSGKHL) are compositionally biased toward basic and acidic residues.

Interacts with AFPH2/NINJA. Expressed in root vasculature, shoot apical meristem (SAM) and leaves.

Activator of mRNA decapping. Involved in mRNA decay via decapping. Involved in the regulation of root stem cell niche identity. Maintains root stem cell niche stability through the interaction with the negative regulator of jasmonate signaling AFPH2/NINJA, and the regulation of cell division. The protein is Protein PAT1 homolog 1 of Arabidopsis thaliana (Mouse-ear cress).